The sequence spans 237 residues: Ig heavy chain Mem5 (237 aa).

Ig-like domains lie at 1–119 (EVKL…LTVS) and 126–218 (PSVY…KKIE). A disulfide bridge connects residues Cys22 and Cys98. Residues 101-105 (VDYGT) form a d segment region. A JH2 segment region spans residues 106–120 (NYDYWGQGTTLTVSS). Cys147 and Cys202 are joined by a disulfide.

The protein localises to the secreted. Functionally, anti-influenza H3N2 neuraminidase antibody. The polypeptide is Ig heavy chain Mem5 (Mus musculus (Mouse)).